We begin with the raw amino-acid sequence, 127 residues long: Small ribosomal subunit protein uS11 (127 aa).

The protein belongs to the universal ribosomal protein uS11 family. Part of the 30S ribosomal subunit.

Functionally, located on the platform of the 30S subunit. In Picrophilus torridus (strain ATCC 700027 / DSM 9790 / JCM 10055 / NBRC 100828 / KAW 2/3), this protein is Small ribosomal subunit protein uS11.